We begin with the raw amino-acid sequence, 43 residues long: MTKNINQPVAYPIFTFRWLAIHGLAIPTVFFLGGITAMQFIQR.

A helical membrane pass occupies residues 18–34; the sequence is WLAIHGLAIPTVFFLGG. Histidine 22 contributes to the heme binding site.

This sequence belongs to the PsbE/PsbF family. In terms of assembly, heterodimer of an alpha subunit and a beta subunit. PSII is composed of 1 copy each of membrane proteins PsbA, PsbB, PsbC, PsbD, PsbE, PsbF, PsbH, PsbI, PsbJ, PsbK, PsbL, PsbM, PsbT, PsbX, PsbY, PsbZ, Psb30/Ycf12, at least 3 peripheral proteins of the oxygen-evolving complex and a large number of cofactors. It forms dimeric complexes. The cofactor is heme b.

Its subcellular location is the plastid. It localises to the chloroplast thylakoid membrane. Its function is as follows. This b-type cytochrome is tightly associated with the reaction center of photosystem II (PSII). PSII is a light-driven water:plastoquinone oxidoreductase that uses light energy to abstract electrons from H(2)O, generating O(2) and a proton gradient subsequently used for ATP formation. It consists of a core antenna complex that captures photons, and an electron transfer chain that converts photonic excitation into a charge separation. This Trieres chinensis (Marine centric diatom) protein is Cytochrome b559 subunit beta.